The sequence spans 232 residues: Phosphatidylserine decarboxylase proenzyme (232 aa).

The active-site Schiff-base intermediate with substrate; via pyruvic acid is Ser-190. Ser-190 carries the pyruvic acid (Ser); by autocatalysis modification.

It belongs to the phosphatidylserine decarboxylase family. PSD-A subfamily. In terms of assembly, heterodimer of a large membrane-associated beta subunit and a small pyruvoyl-containing alpha subunit. It depends on pyruvate as a cofactor. Post-translationally, is synthesized initially as an inactive proenzyme. Formation of the active enzyme involves a self-maturation process in which the active site pyruvoyl group is generated from an internal serine residue via an autocatalytic post-translational modification. Two non-identical subunits are generated from the proenzyme in this reaction, and the pyruvate is formed at the N-terminus of the alpha chain, which is derived from the carboxyl end of the proenzyme. The post-translation cleavage follows an unusual pathway, termed non-hydrolytic serinolysis, in which the side chain hydroxyl group of the serine supplies its oxygen atom to form the C-terminus of the beta chain, while the remainder of the serine residue undergoes an oxidative deamination to produce ammonia and the pyruvoyl prosthetic group on the alpha chain.

It is found in the cell membrane. The catalysed reaction is a 1,2-diacyl-sn-glycero-3-phospho-L-serine + H(+) = a 1,2-diacyl-sn-glycero-3-phosphoethanolamine + CO2. The protein operates within phospholipid metabolism; phosphatidylethanolamine biosynthesis; phosphatidylethanolamine from CDP-diacylglycerol: step 2/2. In terms of biological role, catalyzes the formation of phosphatidylethanolamine (PtdEtn) from phosphatidylserine (PtdSer). The chain is Phosphatidylserine decarboxylase proenzyme from Rhodopseudomonas palustris (strain BisB18).